The following is a 198-amino-acid chain: Protein hunchback (198 aa).

Disordered stretches follow at residues 16–111 (SHHH…LPGL) and 152–198 (NDKL…KYMA). Residues 17–31 (HHHHHHHAHHSHHQH) show a composition bias toward basic residues. 2 stretches are compositionally biased toward low complexity: residues 35–46 (SNSNSNASSPHQ) and 56–83 (SNTN…QQQQ). The segment covering 95–105 (PSPSNNDQNSP) has biased composition (polar residues). A compositionally biased stretch (basic and acidic residues) spans 179 to 198 (EPEKEHDLMSNSSEDMKYMA).

The protein belongs to the hunchback C2H2-type zinc-finger protein family.

It is found in the nucleus. Functionally, gap class segmentation protein that controls development of head structures. The polypeptide is Protein hunchback (hb) (Drosophila lineosetae (Fruit fly)).